A 339-amino-acid polypeptide reads, in one-letter code: MAMAKALLFAILGCLCLCSAVLAARELSDDAAMAARHERWMAQYGRVYRDDAEKARRFEVFKANVAFIESFNAGNHNFWLGVNQFADLTNDEFRWTKTNKGFIPSTTRVPTGFRYENVNIDALPATVDWRTKGAVTPIKDQGQCGCCWAFSAVAAMEGIVKLSTGKLISLSEQELVDCDVHGEDQGCEGGLMDDAFKFIIKNGGLTTESNYPYAAADDKCKSVSNSVASIKGYEDVPANNEAALMKAVANQPVSVAVDGGDMTFQFYKGGVMTGSCGTDLDHGIVAIGYGKASDGTKYWLLKNSWGTTWGENGFLRMEKDISDKRGMCGLAMEPSYPTA.

The signal sequence occupies residues 1-23; it reads MAMAKALLFAILGCLCLCSAVLA. Cystine bridges form between Cys144/Cys187, Cys178/Cys220, and Cys276/Cys328. The active site involves Cys147. Residues His282 and Asn303 contribute to the active site.

The protein belongs to the peptidase C1 family.

Its subcellular location is the vacuole. In terms of biological role, cysteine protease that may have a developmental senescence specific cell death function during apoptosis, heavy metal detoxification, and hypersensitive response. The sequence is that of Senescence-specific cysteine protease SAG39 from Oryza sativa subsp. indica (Rice).